The primary structure comprises 400 residues: Deoxyguanosinetriphosphate triphosphohydrolase-like protein (400 aa).

An HD domain is found at Arg73 to Asn215.

The protein belongs to the dGTPase family. Type 2 subfamily.

This is Deoxyguanosinetriphosphate triphosphohydrolase-like protein from Bartonella tribocorum (strain CIP 105476 / IBS 506).